Here is a 56-residue protein sequence, read N- to C-terminus: Large ribosomal subunit protein bL32 (56 aa).

The tract at residues 1–37 (MAVQQNKKSRSKRGMRRSHDALSTAQLSVDATSGELH) is disordered. Residues 7–16 (KKSRSKRGMR) show a composition bias toward basic residues. Residues 21-31 (ALSTAQLSVDA) show a composition bias toward polar residues.

It belongs to the bacterial ribosomal protein bL32 family.

The chain is Large ribosomal subunit protein bL32 from Shewanella loihica (strain ATCC BAA-1088 / PV-4).